The chain runs to 61 residues: Small ribosomal subunit protein uS14 (61 aa).

Residues cysteine 24, cysteine 27, cysteine 40, and cysteine 43 each contribute to the Zn(2+) site.

This sequence belongs to the universal ribosomal protein uS14 family. Zinc-binding uS14 subfamily. In terms of assembly, part of the 30S ribosomal subunit. Contacts proteins S3 and S10. The cofactor is Zn(2+).

Binds 16S rRNA, required for the assembly of 30S particles and may also be responsible for determining the conformation of the 16S rRNA at the A site. The protein is Small ribosomal subunit protein uS14 of Mesoplasma florum (strain ATCC 33453 / NBRC 100688 / NCTC 11704 / L1) (Acholeplasma florum).